The primary structure comprises 349 residues: Transcription elongation factor A protein 3 (349 aa).

The TFIIS N-terminal domain maps to 5–82 (EELLRIAKKL…RNWKQLLDSP (78 aa)). Residues 80–170 (DSPATPKGEK…RTPSSPSSPT (91 aa)) form a disordered region. Basic and acidic residues predominate over residues 101–110 (KGLDCSDWKP). S115 is subject to Phosphoserine. Residues 121-133 (RVEEPKDRRDSVD) are compositionally biased toward basic and acidic residues. Low complexity-rich tracts occupy residues 134–144 (SKSSATSSPKR) and 160–170 (PRTPSSPSSPT). A Phosphoserine modification is found at S141. A TFIIS central domain is found at 188–304 (VRDKCVEMLS…EHQMAKTGGT (117 aa)). The segment at 307-347 (DLFQCSKCKKKNCTYNQVQTRSADEPMTTFVLCNECGNRWK) adopts a TFIIS-type zinc-finger fold. The Zn(2+) site is built by C311, C314, C339, and C342.

This sequence belongs to the TFS-II family.

It localises to the nucleus. Necessary for efficient RNA polymerase II transcription elongation past template-encoded arresting sites. The arresting sites in DNA have the property of trapping a certain fraction of elongating RNA polymerases that pass through, resulting in locked ternary complexes. Cleavage of the nascent transcript by S-II allows the resumption of elongation from the new 3'-terminus. This chain is Transcription elongation factor A protein 3 (TCEA3), found in Bos taurus (Bovine).